Reading from the N-terminus, the 973-residue chain is MSLFPQILLRLLFLAFTLKSTSNAEKHDKVDYKDFVRRDDGDTCLRYTTIYSQGEYETTITIPPNSYSNGVSLSNGTLLSTSSPLISTSGQFTSNNVSTTSSQRHNTKTITFFSGTSDYTSVYYDTTGTDDVVYEYHPSSERHKSTNDTWSTNLPTNPTTTAIYSTSGSSNITTPYSNRITNSNTSVNDITSKYLSVGTITLTTISGSDLYTSTFPANGTTSGTVEVVIPTAGTVTETAVSGSELYTSTFPANGTTSGTVEVVIPTAGTRTVTKISGSKFFTTTTDASGTVSGTVEVVLPTAGTNTMTVVSGSRFFTSVVSASGTVSGEQVIVYPTAGMVTETIVSGSEIFNTTYPASGTRTGTVEVVIPTAGTVTETEISGSELYTSTFPANGTTSGTVEVVIPTAGTRTVTKISGSKFFTTTTDASGTVSGTVEVVLPTAGTNTMTVVSGSRFFTSVVSASGTVSGEHIIVEPTAGVVTETVVSGSVGYTTTYPAHDTVSGTVEVVEPTAGVVTETVVSGSVGYTTAYPAHDTVSGTVEVVEPTAGVVTETVVSGSVGYTTTYPAHDTVSGTVEVVEPTAGVVTETVVSGSVGYTTTYPAHDTVSGTVEVVEPTAGVVTETVVSGSVGYTTTYPAHDTVSGTVEVVEPTAGVVTETVVSGSVGYTTTYPAHDTVSGTVEVVEPTAGVVTETVVSGSVGYTTTYPAHDTVSGTVEVVEPTAGVVTETVVSGSVGYTTTYPAHDTVSGTVEVVEPTAGVVTETVVSGSVGYTTTYPVQGTVSGTVMIVEPTAGYVTVTTSLGSSSYATTVATASGTSTGTVLQVVPSLFPGCNSKCTSSNAFRILVENDSISPSYLTYRESDGFGIASSNPSPAGSEGIFYYDSTLKRVVTCCDERPYYRTMEGDLAKTYFFIEDEGDGTYKFKLTYGAFSEYLDVKILADSTFFFKAMDSSSSTILNQKVRASNVYFKAVPL.

Positions 1-24 (MSLFPQILLRLLFLAFTLKSTSNA) are cleaved as a signal peptide. N-linked (GlcNAc...) asparagine glycosylation is found at Asn75, Asn96, Asn147, Asn171, Asn184, Asn218, and Asn253. A run of 18 repeats spans residues 198–232 (GTIT…IPTA), 233–267 (GTVT…IPTA), 268–302 (GTRT…LPTA), 303–337 (GTNT…YPTA), 338–372 (GMVT…IPTA), 373–407 (GTVT…IPTA), 408–442 (GTRT…LPTA), 443–477 (GTNT…EPTA), 478–512 (GVVT…EPTA), 513–547 (GVVT…EPTA), 548–582 (GVVT…EPTA), 583–617 (GVVT…EPTA), 618–652 (GVVT…EPTA), 653–687 (GVVT…EPTA), 688–722 (GVVT…EPTA), 723–757 (GVVT…EPTA), 758–792 (GVVT…EPTA), and 793–828 (GYVT…VPSL). The segment at 198 to 828 (GTITLTTISG…GTVLQVVPSL (631 aa)) is 18 X 35 AA approximate tandem repeats. Asn352 and Asn393 each carry an N-linked (GlcNAc...) asparagine glycan. The region spanning 820–973 (TVLQVVPSLF…SNVYFKAVPL (154 aa)) is the DIPSY domain. An N-linked (GlcNAc...) asparagine glycan is attached at Asn848.

It belongs to the mam3/map4 family.

It localises to the cell surface. May be involved in agglutination during conjugation or other aspects of colony formation. Induces flocculation when overexpressed. This chain is Putative cell agglutination protein pfl3, found in Schizosaccharomyces pombe (strain 972 / ATCC 24843) (Fission yeast).